The sequence spans 189 residues: dCTP deaminase, dUMP-forming (189 aa).

DCTP is bound by residues 101-106 (KSSLGR), Asp119, 127-129 (TLE), Gln148, Tyr162, Lys170, and Gln174. Residue Glu129 is the Proton donor/acceptor of the active site. The disordered stretch occupies residues 163 to 189 (GSGKLGSKYQGQRGPTPSKAYLNFPNK).

This sequence belongs to the dCTP deaminase family. Homotrimer.

It carries out the reaction dCTP + 2 H2O = dUMP + NH4(+) + diphosphate. Its pathway is pyrimidine metabolism; dUMP biosynthesis; dUMP from dCTP: step 1/1. Functionally, bifunctional enzyme that catalyzes both the deamination of dCTP to dUTP and the hydrolysis of dUTP to dUMP without releasing the toxic dUTP intermediate. This is dCTP deaminase, dUMP-forming from Corynebacterium glutamicum (strain R).